We begin with the raw amino-acid sequence, 551 residues long: Tetrachloroethene reductive dehalogenase (551 aa).

The segment at residues 1-39 (MGEINRRNFLKASMLGAAAAAVASASAVKGMVSPLVADA) is a signal peptide (tat-type signal). Positions 411 to 440 (PRKFGVREFCRLCKKCADACPAQAISHEKD) constitute a 4Fe-4S ferredoxin-type 1 domain. Residues Cys-420, Cys-423, Cys-426, Cys-430, Cys-467, Cys-478, Cys-481, and Cys-485 each contribute to the [4Fe-4S] cluster site. One can recognise a 4Fe-4S ferredoxin-type 2 domain in the interval 478–496 (CANCVAVCSWNKVETWNHD).

Belongs to the PceA family. In terms of assembly, monomer. The cofactor is [4Fe-4S] cluster. Corrinoid is required as a cofactor. Predicted to be exported by the Tat system. The position of the signal peptide cleavage has been experimentally proven.

Its subcellular location is the cell membrane. The catalysed reaction is trichloroethene + chloride + A + H(+) = tetrachloroethene + AH2. It catalyses the reaction trichloroethene + AH2 = (Z)-1,2-dichloroethene + chloride + A + H(+). Activity is inhibited by ammonium ions. Photoreversibly inactivated by 1-iodopropane. Catalyzes the reductive dechlorination of tetrachloroethene (PCE) to trichloroethene (TCE) and of trichloroethene to cis-1,2-dichloroethene (DCE). Can also use trichlorofluoroethene, tetrachloromethane, hexachloroethane, tetrachloroethane, trichloroethane and 1,1,1-trichloro-2,2,2-trifluoroethane. Menaquinone can act as the electron donor. Reduced methyl viologen can act as the artificial electron donor. The sequence is that of Tetrachloroethene reductive dehalogenase from Dehalobacter restrictus (strain DSM 9455 / PER-K23).